A 158-amino-acid polypeptide reads, in one-letter code: Snaclec convulxin subunit alpha (158 aa).

A signal peptide spans 1-23 (MGRFIFVSFGLLVLFLSLSGTGA). 3 cysteine pairs are disulfide-bonded: Cys27/Cys38, Cys55/Cys152, and Cys127/Cys144. Residues 34 to 158 (YDQHCYRIFN…PFVCKFPPQC (125 aa)) form the C-type lectin domain.

The protein belongs to the snaclec family. In terms of assembly, tetramer of heterodimers of alpha and beta subunits (alphabeta)(4); disulfide-linked. As to expression, expressed by the venom gland.

The protein localises to the secreted. Functionally, snake venom lectin that activates platelets by binding to the platelet collagen receptor glycoprotein VI (GP6). The indirect activation of integrin alpha-IIb/beta-3 (ITGA2B/ITGB3) also induced by the toxin is upstream the cytoskeletal translocation of GPIb, FcRgamma (FCER1G) and 14-3-3zeta (YWHAZ). The protein is Snaclec convulxin subunit alpha of Crotalus durissus terrificus (South American rattlesnake).